The sequence spans 459 residues: Ribulose bisphosphate carboxylase/oxygenase activase, chloroplastic (459 aa).

An ATP-binding site is contributed by 164 to 171 (GGKGQGKS).

Belongs to the RuBisCO activase family.

Its subcellular location is the plastid. The protein resides in the chloroplast stroma. Its function is as follows. Activation of RuBisCO (ribulose-1,5-bisphosphate carboxylase/oxygenase; EC 4.1.1.39) involves the ATP-dependent carboxylation of the epsilon-amino group of lysine leading to a carbamate structure. The chain is Ribulose bisphosphate carboxylase/oxygenase activase, chloroplastic from Solanum pennellii (Tomato).